Here is a 384-residue protein sequence, read N- to C-terminus: Mannitol-1-phosphate 5-dehydrogenase (384 aa).

4–15 (AVHFGAGNIGRG) contributes to the NAD(+) binding site.

Belongs to the mannitol dehydrogenase family.

It carries out the reaction D-mannitol 1-phosphate + NAD(+) = beta-D-fructose 6-phosphate + NADH + H(+). The chain is Mannitol-1-phosphate 5-dehydrogenase from Lacticaseibacillus paracasei (strain ATCC 334 / BCRC 17002 / CCUG 31169 / CIP 107868 / KCTC 3260 / NRRL B-441) (Lactobacillus paracasei).